Here is a 152-residue protein sequence, read N- to C-terminus: uncharacterized protein (152 aa).

The next 3 membrane-spanning stretches (helical) occupy residues Leu-13–Phe-33, Leu-38–Met-58, and Trp-69–Ile-89.

The protein localises to the cell membrane. This is an uncharacterized protein from Mycoplasma pneumoniae (strain ATCC 29342 / M129 / Subtype 1) (Mycoplasmoides pneumoniae).